Consider the following 192-residue polypeptide: uncharacterized protein (192 aa).

The signal sequence occupies residues 1-17; the sequence is MFKKILFPLVALFMLAG. Cys18 carries the N-palmitoyl cysteine lipid modification. Cys18 carries S-diacylglycerol cysteine lipidation.

This sequence to H.influenzae HI_0162.

Its subcellular location is the cell membrane. This is an uncharacterized protein from Escherichia coli O6:H1 (strain CFT073 / ATCC 700928 / UPEC).